The following is a 397-amino-acid chain: Elongation factor Tu (397 aa).

A tr-type G domain is found at 10-207 (KPHVNIGTIG…AVDESIPEPV (198 aa)). The segment at 19–26 (GHVDHGKT) is G1. A GTP-binding site is contributed by 19-26 (GHVDHGKT). Residue T26 participates in Mg(2+) binding. The segment at 63 to 67 (GITIN) is G2. The segment at 84–87 (DAPG) is G3. Residues 84 to 88 (DAPGH) and 139 to 142 (NKSD) each bind GTP. Residues 139 to 142 (NKSD) form a G4 region. A G5 region spans residues 177–179 (SGL).

This sequence belongs to the TRAFAC class translation factor GTPase superfamily. Classic translation factor GTPase family. EF-Tu/EF-1A subfamily. As to quaternary structure, monomer.

Its subcellular location is the cytoplasm. The enzyme catalyses GTP + H2O = GDP + phosphate + H(+). Functionally, GTP hydrolase that promotes the GTP-dependent binding of aminoacyl-tRNA to the A-site of ribosomes during protein biosynthesis. The chain is Elongation factor Tu from Clavibacter sepedonicus (Clavibacter michiganensis subsp. sepedonicus).